The chain runs to 298 residues: dTDP-4-dehydrorhamnose reductase (298 aa).

NADH-binding positions include 10–12, 35–36, and 59–61; these read GQV, DL, and AYT. NADPH contacts are provided by residues 11 to 12, 35 to 36, 59 to 61, and Y98; these read QV, DL, and AYT. Residue 100–101 coordinates dTDP-beta-L-rhamnose; it reads TD. Residues Y124 and K128 each contribute to the NADH site. NADPH is bound by residues Y124 and K128. The active-site Proton donor/acceptor is Y124. W149 lines the dTDP-beta-L-rhamnose pocket.

Belongs to the dTDP-4-dehydrorhamnose reductase family. Homodimer. The cofactor is Mg(2+).

It carries out the reaction dTDP-beta-L-rhamnose + NADP(+) = dTDP-4-dehydro-beta-L-rhamnose + NADPH + H(+). Its pathway is carbohydrate biosynthesis; dTDP-L-rhamnose biosynthesis. It functions in the pathway bacterial outer membrane biogenesis; LPS O-antigen biosynthesis. In terms of biological role, involved in the biosynthesis of the dTDP-L-rhamnose which is an important component of lipopolysaccharide (LPS). Catalyzes the reduction of dTDP-6-deoxy-L-lyxo-4-hexulose to yield dTDP-L-rhamnose. The chain is dTDP-4-dehydrorhamnose reductase from Burkholderia thailandensis (strain ATCC 700388 / DSM 13276 / CCUG 48851 / CIP 106301 / E264).